The sequence spans 416 residues: Gamma-glutamyl phosphate reductase (416 aa).

It belongs to the gamma-glutamyl phosphate reductase family.

The protein resides in the cytoplasm. It catalyses the reaction L-glutamate 5-semialdehyde + phosphate + NADP(+) = L-glutamyl 5-phosphate + NADPH + H(+). It participates in amino-acid biosynthesis; L-proline biosynthesis; L-glutamate 5-semialdehyde from L-glutamate: step 2/2. In terms of biological role, catalyzes the NADPH-dependent reduction of L-glutamate 5-phosphate into L-glutamate 5-semialdehyde and phosphate. The product spontaneously undergoes cyclization to form 1-pyrroline-5-carboxylate. In Salmonella arizonae (strain ATCC BAA-731 / CDC346-86 / RSK2980), this protein is Gamma-glutamyl phosphate reductase.